The following is a 1429-amino-acid chain: Alpha-agarase (1429 aa).

Positions 1–26 (MFKTKRSLLNSSIAISFAVLGVQAQA) are cleaved as a signal peptide. 2 CBM6 domains span residues 29-161 (LELQ…FRLT) and 211-345 (FVIQ…LTFT). Disordered regions lie at residues 349–400 (SDGG…DGVS) and 474–495 (NTPAGTQVDASGCETDNGGEPG). The span at 369–378 (SSDSCPNTPT) shows a compositional bias: polar residues. In terms of domain architecture, PA14 spans 490 to 638 (NGGEPGDSYY…GGTNFVHPSN (149 aa)). The 132-residue stretch at 662 to 793 (IYIQLEDFDE…QWSGDLVRLA (132 aa)) folds into the CBM6 3 domain.

The protein belongs to the glycosyl hydrolase 96 family. As to quaternary structure, homodimer. Requires Ca(2+) as cofactor.

It catalyses the reaction Endohydrolysis of 1,3-alpha-L-galactosidic linkages in agarose, yielding agarotetraose as the major product.. In terms of biological role, alpha-agarase. Does not hydrolyze agarotetraose, agarohexaose, kappa-carrageenan, iota-carrageenan or lambda-carrageenan. This is Alpha-agarase from Alteromonas agarilytica.